Reading from the N-terminus, the 433-residue chain is Signal recognition particle 54 kDa protein (433 aa).

Residues 106 to 113, 186 to 190, and 244 to 247 each bind GTP; these read GVEGSGKT, DTAGR, and TKMD.

This sequence belongs to the GTP-binding SRP family. SRP54 subfamily. Part of the signal recognition particle protein translocation system, which is composed of SRP and FtsY. Archaeal SRP consists of a 7S RNA molecule of 300 nucleotides and two protein subunits: SRP54 and SRP19.

The protein resides in the cytoplasm. It catalyses the reaction GTP + H2O = GDP + phosphate + H(+). Functionally, involved in targeting and insertion of nascent membrane proteins into the cytoplasmic membrane. Binds to the hydrophobic signal sequence of the ribosome-nascent chain (RNC) as it emerges from the ribosomes. The SRP-RNC complex is then targeted to the cytoplasmic membrane where it interacts with the SRP receptor FtsY. The polypeptide is Signal recognition particle 54 kDa protein (Pyrobaculum islandicum (strain DSM 4184 / JCM 9189 / GEO3)).